The primary structure comprises 649 residues: Alpha-amylase (649 aa).

Glu124 serves as the catalytic Nucleophile. The active-site Proton donor is the Asp215.

Belongs to the glycosyl hydrolase 57 family. As to quaternary structure, homodimer.

The catalysed reaction is Endohydrolysis of (1-&gt;4)-alpha-D-glucosidic linkages in polysaccharides containing three or more (1-&gt;4)-alpha-linked D-glucose units.. Functionally, displays a broad range of substrate specificity, with the capacity to hydrolyze carbohydrates as simple as maltotriose. The polypeptide is Alpha-amylase (amyA) (Pyrococcus furiosus (strain ATCC 43587 / DSM 3638 / JCM 8422 / Vc1)).